A 461-amino-acid polypeptide reads, in one-letter code: METLFNGTLTVGGRDQESTGFAWWAGNARLINLSGKLLGAHVAHAGLIVYWAGAMNLFEVAHFVPEKPMYEQGLILLPHLATLGYGVGPGGEVIDTFPYFVSGVLHLISSAVLGFGGVYHSLIGPETLEESFPFFGYVWKDKNKMTNILGYHLIMLGIGAWLLVWKAMYFGGVYDTWAPGGGDVRIITNPTTNAAVVFGYLLKSPFGGDGWIVSVDNMEDIIGGHIWIGTLCILGGLWHIYTTPWPWARRAFVWSGEAYLSYSLGAISLMGFIACCMSWFNNTAYPSEFYGPTGPEASQSQAFTFLVRDQRLGANVASAQGPTGLGKYLMRSPTGEIIFGGETMRFWDFRGPWLEPLRGPNGLDLNKLKNDIQPWQERRAAEYMTHAPLGSLNSVGGVATEINAVNFVSPRSWLATSHFVLGFFFFVGHLWHAGRARAAAAGFEKGIDRLDEPVLSMRPLD.

Residues 1–2 constitute a propeptide that is removed on maturation; that stretch reads ME. Residue threonine 3 is modified to N-acetylthreonine. A Phosphothreonine modification is found at threonine 3. A run of 5 helical transmembrane segments spans residues 57–81, 122–143, 166–188, 243–263, and 279–300; these read LFEV…PHLA, LIGP…KDKN, KAMY…RIIT, TPWP…LSYS, and WFNN…ASQS. [CaMn4O5] cluster is bound at residue glutamate 355. Residues 435 to 459 traverse the membrane as a helical segment; that stretch reads RARAAAAGFEKGIDRLDEPVLSMRP.

The protein belongs to the PsbB/PsbC family. PsbC subfamily. In terms of assembly, PSII is composed of 1 copy each of membrane proteins PsbA, PsbB, PsbC, PsbD, PsbE, PsbF, PsbH, PsbI, PsbJ, PsbK, PsbL, PsbM, PsbT, PsbX, PsbY, PsbZ, Psb30/Ycf12, at least 3 peripheral proteins of the oxygen-evolving complex and a large number of cofactors. It forms dimeric complexes. Requires Binds multiple chlorophylls and provides some of the ligands for the Ca-4Mn-5O cluster of the oxygen-evolving complex. It may also provide a ligand for a Cl- that is required for oxygen evolution. PSII binds additional chlorophylls, carotenoids and specific lipids. as cofactor.

The protein resides in the plastid. It is found in the chloroplast thylakoid membrane. Functionally, one of the components of the core complex of photosystem II (PSII). It binds chlorophyll and helps catalyze the primary light-induced photochemical processes of PSII. PSII is a light-driven water:plastoquinone oxidoreductase, using light energy to abstract electrons from H(2)O, generating O(2) and a proton gradient subsequently used for ATP formation. This chain is Photosystem II CP43 reaction center protein, found in Tetradesmus obliquus (Green alga).